A 152-amino-acid polypeptide reads, in one-letter code: Putative aryl-alcohol dehydrogenase YFL057C (152 aa).

It belongs to the aldo/keto reductase family. Aldo/keto reductase 2 subfamily.

In terms of biological role, putative aryl-alcohol dehydrogenase. The polypeptide is Putative aryl-alcohol dehydrogenase YFL057C (Saccharomyces cerevisiae (strain ATCC 204508 / S288c) (Baker's yeast)).